A 222-amino-acid polypeptide reads, in one-letter code: MTRIKICGITTLEDALAAVEAGAHALGFNFSTTSPRAVTPQTARSIISAIPPFITTTGIFVEQSPDEINSICERCNLHCAQLHSEAYDAQSSLAVSAPSIIRVFRAGPSFHMDQVRSYAGKTGIRNFLFDAFREGQPGGTGESIEDTTAIRIFKETASIGSAILAGGLKPENVGRAIRLVSPYAVDTASGVESVPGRKDHDKIRAFVRAVQEADNDSSSPEA.

Belongs to the TrpF family.

It carries out the reaction N-(5-phospho-beta-D-ribosyl)anthranilate = 1-(2-carboxyphenylamino)-1-deoxy-D-ribulose 5-phosphate. Its pathway is amino-acid biosynthesis; L-tryptophan biosynthesis; L-tryptophan from chorismate: step 3/5. The polypeptide is N-(5'-phosphoribosyl)anthranilate isomerase (Prosthecochloris aestuarii (strain DSM 271 / SK 413)).